A 477-amino-acid chain; its full sequence is Glycogen synthase (477 aa).

An ADP-alpha-D-glucose-binding site is contributed by Lys15.

It belongs to the glycosyltransferase 1 family. Bacterial/plant glycogen synthase subfamily.

It carries out the reaction [(1-&gt;4)-alpha-D-glucosyl](n) + ADP-alpha-D-glucose = [(1-&gt;4)-alpha-D-glucosyl](n+1) + ADP + H(+). Its pathway is glycan biosynthesis; glycogen biosynthesis. In terms of biological role, synthesizes alpha-1,4-glucan chains using ADP-glucose. This Streptococcus pneumoniae serotype 2 (strain D39 / NCTC 7466) protein is Glycogen synthase.